Here is a 148-residue protein sequence, read N- to C-terminus: MGRIIFVSFGLLVVFLSLSGTGAALNCASGWSGYDQHCYKVFDKPKSWADAEKFCKKQTSGGHLVSFHSSEETDFVVKLVSQTLESQILWMGLSKVWNQCDWGWSNGAKLKYKAWAEESYCVYFSSTKKGWRSRACRLLGHFVCKSPA.

Residues M1–A24 form the signal peptide. 3 disulfide bridges follow: C27/C38, C55/C144, and C121/C136. The region spanning Y34–K145 is the C-type lectin domain.

Belongs to the snaclec family. As to quaternary structure, heterodimer; disulfide-linked. In terms of tissue distribution, expressed by the venom gland.

The protein localises to the secreted. Interferes with one step of hemostasis (modulation of platelet aggregation, or coagulation cascade, for example). The protein is Snaclec B4 of Macrovipera lebetinus (Levantine viper).